The primary structure comprises 362 residues: Aminomethyltransferase (362 aa).

This sequence belongs to the GcvT family. As to quaternary structure, the glycine cleavage system is composed of four proteins: P, T, L and H.

It carries out the reaction N(6)-[(R)-S(8)-aminomethyldihydrolipoyl]-L-lysyl-[protein] + (6S)-5,6,7,8-tetrahydrofolate = N(6)-[(R)-dihydrolipoyl]-L-lysyl-[protein] + (6R)-5,10-methylene-5,6,7,8-tetrahydrofolate + NH4(+). The glycine cleavage system catalyzes the degradation of glycine. The polypeptide is Aminomethyltransferase (Pseudothermotoga lettingae (strain ATCC BAA-301 / DSM 14385 / NBRC 107922 / TMO) (Thermotoga lettingae)).